We begin with the raw amino-acid sequence, 259 residues long: 5'-nucleotidase SurE (259 aa).

A divalent metal cation-binding residues include Asp-8, Asp-9, Ser-41, and Asn-93.

The protein belongs to the SurE nucleotidase family. Requires a divalent metal cation as cofactor.

It is found in the cytoplasm. It carries out the reaction a ribonucleoside 5'-phosphate + H2O = a ribonucleoside + phosphate. Nucleotidase that shows phosphatase activity on nucleoside 5'-monophosphates. The polypeptide is 5'-nucleotidase SurE (Verminephrobacter eiseniae (strain EF01-2)).